Here is a 363-residue protein sequence, read N- to C-terminus: Sorting nexin-21 (363 aa).

Residues Met-1–His-11 show a composition bias toward basic residues. The segment at Met-1–Gln-99 is disordered. Residues Ala-12 to Glu-28 show a composition bias toward low complexity. Positions Ser-46–Ser-56 are enriched in polar residues. Residues Ala-57 to Gly-71 are compositionally biased toward acidic residues. The PX domain occupies Gln-119–Arg-236. The a 1,2-diacyl-sn-glycero-3-phospho-(1D-myo-inositol-3-phosphate) site is built by Arg-161, Ser-163, Lys-188, and Arg-202.

It belongs to the sorting nexin family. In terms of assembly, monomer.

The protein resides in the cytoplasmic vesicle membrane. It localises to the early endosome membrane. Functionally, binds to membranes enriched in phosphatidylinositol 3-phosphate (PtdIns(P3)) and phosphatidylinositol 4,5-bisphosphate. May be involved in several stages of intracellular trafficking. This is Sorting nexin-21 from Mus musculus (Mouse).